A 398-amino-acid polypeptide reads, in one-letter code: Na(+)/H(+) antiporter NhaA (398 aa).

The next 11 membrane-spanning stretches (helical) occupy residues alanine 14 to valine 34, leucine 60 to valine 80, methionine 96 to phenylalanine 116, valine 125 to leucine 145, valine 155 to phenylalanine 175, glutamine 179 to asparagine 199, isoleucine 214 to valine 234, phenylalanine 263 to leucine 283, leucine 292 to leucine 312, isoleucine 330 to leucine 350, and tyrosine 362 to leucine 382.

It belongs to the NhaA Na(+)/H(+) (TC 2.A.33) antiporter family.

It is found in the cell inner membrane. The catalysed reaction is Na(+)(in) + 2 H(+)(out) = Na(+)(out) + 2 H(+)(in). In terms of biological role, na(+)/H(+) antiporter that extrudes sodium in exchange for external protons. The sequence is that of Na(+)/H(+) antiporter NhaA from Pectobacterium carotovorum subsp. carotovorum (strain PC1).